Consider the following 465-residue polypeptide: Siroheme synthase (465 aa).

The interval Met-1 to Leu-203 is precorrin-2 dehydrogenase /sirohydrochlorin ferrochelatase. NAD(+) contacts are provided by residues Glu-22 to Ile-23 and Pro-43 to Ser-44. At Ser-128 the chain carries Phosphoserine. Residues Gly-216 to Arg-465 are uroporphyrinogen-III C-methyltransferase. Position 225 (Pro-225) interacts with S-adenosyl-L-methionine. The active-site Proton acceptor is the Asp-248. Catalysis depends on Lys-270, which acts as the Proton donor. Residues Gly-301 to Asp-303, Ile-306, Thr-331 to Ala-332, Met-383, and Gly-412 contribute to the S-adenosyl-L-methionine site.

In the N-terminal section; belongs to the precorrin-2 dehydrogenase / sirohydrochlorin ferrochelatase family. This sequence in the C-terminal section; belongs to the precorrin methyltransferase family.

It carries out the reaction uroporphyrinogen III + 2 S-adenosyl-L-methionine = precorrin-2 + 2 S-adenosyl-L-homocysteine + H(+). It catalyses the reaction precorrin-2 + NAD(+) = sirohydrochlorin + NADH + 2 H(+). The enzyme catalyses siroheme + 2 H(+) = sirohydrochlorin + Fe(2+). It functions in the pathway cofactor biosynthesis; adenosylcobalamin biosynthesis; precorrin-2 from uroporphyrinogen III: step 1/1. It participates in cofactor biosynthesis; adenosylcobalamin biosynthesis; sirohydrochlorin from precorrin-2: step 1/1. The protein operates within porphyrin-containing compound metabolism; siroheme biosynthesis; precorrin-2 from uroporphyrinogen III: step 1/1. Its pathway is porphyrin-containing compound metabolism; siroheme biosynthesis; siroheme from sirohydrochlorin: step 1/1. It functions in the pathway porphyrin-containing compound metabolism; siroheme biosynthesis; sirohydrochlorin from precorrin-2: step 1/1. Multifunctional enzyme that catalyzes the SAM-dependent methylations of uroporphyrinogen III at position C-2 and C-7 to form precorrin-2 via precorrin-1. Then it catalyzes the NAD-dependent ring dehydrogenation of precorrin-2 to yield sirohydrochlorin. Finally, it catalyzes the ferrochelation of sirohydrochlorin to yield siroheme. In Stutzerimonas stutzeri (strain A1501) (Pseudomonas stutzeri), this protein is Siroheme synthase.